The following is a 565-amino-acid chain: Oxygen-dependent choline dehydrogenase (565 aa).

Position 6–35 (6–35 (DYIIVGAGSAGNTLATRLTEDAGVTVLLLE)) interacts with FAD. The interval 182-201 (QQEGFGPMDRTVTKNGRRSS) is disordered. His475 acts as the Proton acceptor in catalysis.

It belongs to the GMC oxidoreductase family. It depends on FAD as a cofactor.

The catalysed reaction is choline + A = betaine aldehyde + AH2. It carries out the reaction betaine aldehyde + NAD(+) + H2O = glycine betaine + NADH + 2 H(+). Its pathway is amine and polyamine biosynthesis; betaine biosynthesis via choline pathway; betaine aldehyde from choline (cytochrome c reductase route): step 1/1. In terms of biological role, involved in the biosynthesis of the osmoprotectant glycine betaine. Catalyzes the oxidation of choline to betaine aldehyde and betaine aldehyde to glycine betaine at the same rate. In Pseudomonas putida (strain ATCC 47054 / DSM 6125 / CFBP 8728 / NCIMB 11950 / KT2440), this protein is Oxygen-dependent choline dehydrogenase.